The primary structure comprises 263 residues: (2Z,6E)-farnesyl diphosphate synthase (263 aa).

The active site involves Asp40. Residue Asp40 coordinates Mg(2+). Residues 41-44 (GNRR), Trp45, and 86-88 (STE) each bind substrate. Asn89 serves as the catalytic Proton acceptor. Substrate contacts are provided by residues Arg92, Arg212, and 218-220 (RLS). Glu231 lines the Mg(2+) pocket.

The protein belongs to the UPP synthase family. Z-FPP synthase subfamily. As to quaternary structure, homodimer. Mg(2+) is required as a cofactor.

The protein localises to the cell membrane. It carries out the reaction isopentenyl diphosphate + (2E)-geranyl diphosphate = (2Z,6E)-farnesyl diphosphate + diphosphate. Functionally, catalyzes the condensation of only one isopentenyl pyrophosphate (IPP) unit in the cis configuration to E-geranyl diphosphate (E-GPP) generating the 15 carbon product (2Z,6E)-farnesyl diphosphate (Z-FPP or EZ-FPP). Z-FPP is the precursor of decaprenyl diphosphate, which has a central role in the biosynthesis of the mycobacterial cell wall. The protein is (2Z,6E)-farnesyl diphosphate synthase (uppS) of Mycolicibacterium smegmatis (strain ATCC 700084 / mc(2)155) (Mycobacterium smegmatis).